We begin with the raw amino-acid sequence, 181 residues long: Peptide deformylase (181 aa).

The Fe cation site is built by cysteine 99 and histidine 141. The active site involves glutamate 142. Position 145 (histidine 145) interacts with Fe cation.

The protein belongs to the polypeptide deformylase family. The cofactor is Fe(2+).

The enzyme catalyses N-terminal N-formyl-L-methionyl-[peptide] + H2O = N-terminal L-methionyl-[peptide] + formate. Functionally, removes the formyl group from the N-terminal Met of newly synthesized proteins. Requires at least a dipeptide for an efficient rate of reaction. N-terminal L-methionine is a prerequisite for activity but the enzyme has broad specificity at other positions. The chain is Peptide deformylase from Chlamydia trachomatis serovar A (strain ATCC VR-571B / DSM 19440 / HAR-13).